Reading from the N-terminus, the 199-residue chain is Thymidylate kinase (199 aa).

7–14 contributes to the ATP binding site; sequence GIDGSGKS.

It belongs to the thymidylate kinase family.

It carries out the reaction dTMP + ATP = dTDP + ADP. Functionally, phosphorylation of dTMP to form dTDP in both de novo and salvage pathways of dTTP synthesis. The chain is Thymidylate kinase from Neorickettsia sennetsu (strain ATCC VR-367 / Miyayama) (Ehrlichia sennetsu).